The primary structure comprises 206 residues: MPQYKLTYFDIRGLGEGARLIFHQAGVKFEDNRLKREDWPALKPKTPFGQLPLLEVDGEVLAQSAAIYRYLGRQFGLAGKTPMEEAQVDSIFDQFKDFMAELRPCFRVLAGFEEGDKEKVLKEVAVPARDKHLPLLEKFLAKSGSEYMVGKSVTWADLVITDSLASWESLIPDFLSGHLQLKKYIEHVRELPNIKKWIAERPKTPY.

The region spanning 2–79 is the GST N-terminal domain; sequence PQYKLTYFDI…YLGRQFGLAG (78 aa). Glutathione is bound by residues Y8, W39, K43, 49–51, and 63–64; these read GQL and QS. Positions 81-206 constitute a GST C-terminal domain; that stretch reads TPMEEAQVDS…WIAERPKTPY (126 aa).

Belongs to the GST superfamily. Sigma family.

The catalysed reaction is RX + glutathione = an S-substituted glutathione + a halide anion + H(+). Its function is as follows. Conjugation of reduced glutathione to a wide number of exogenous and endogenous hydrophobic electrophiles. Can also function as a GSH peroxidase. The sequence is that of Glutathione S-transferase 1 (GST1) from Ascaris suum (Pig roundworm).